An 802-amino-acid chain; its full sequence is Probable inactive leucine-rich repeat receptor-like protein kinase At3g03770 (802 aa).

The signal sequence occupies residues 1 to 26; the sequence is MEKLYCGMPLLLLVLLLASIDGSTQL. Residues 27–391 lie on the Extracellular side of the membrane; the sequence is QSSQSQTLLR…RNKVSKVGIA (365 aa). Asn52 and Asn83 each carry an N-linked (GlcNAc...) asparagine glycan. LRR repeat units follow at residues 71-94, 104-128, 129-152, 153-176, 177-200, 201-225, 227-244, 245-268, 269-293, 294-317, and 319-341; these read EDSVTQLHIIGDNGTHMLPKSFSI, LPDVKVLTFVSLGLWGWLPQKINRL, SSLEILNVSSNFLFGPIPHELSSL, ATLQTLILDENMFSGELPDWIDSL, PSLAVLSLRKNVLNGSLPSSLSSL, SGLRVLALANNRFNGALPDLSHLTN, QVLDLEGNSFGPLFPRLS, NKLVTLILSKNKFRSAVSAEEVSS, LYQLQHLDLSYNTFVGPFPTSLMSL, PAITYLNISHNKLTGRLSANLSCN, and QLMFVDMSSNLLTGSLPTCLKPS. An N-linked (GlcNAc...) asparagine glycan is attached at Asn135. Asn190 is a glycosylation site (N-linked (GlcNAc...) asparagine). N-linked (GlcNAc...) asparagine glycosylation is found at Asn300 and Asn313. Residues 392–412 traverse the membrane as a helical segment; that stretch reads LGVTASILGVLLLAGALFVVL. The Cytoplasmic portion of the chain corresponds to 413–802; it reads RRLNAKKTVT…RDSGCEEHER (390 aa). A Protein kinase domain is found at 477 to 759; that stretch reads FESSAFMGEG…FASQVQEGWL (283 aa). The segment at 761–802 is disordered; it reads NSNPSSNLGSPSPAASSLPPPSRLHVTTLESPRDSGCEEHER. Low complexity predominate over residues 762-777; sequence SNPSSNLGSPSPAASS. Residues 791 to 802 are compositionally biased toward basic and acidic residues; sequence SPRDSGCEEHER.

It belongs to the protein kinase superfamily. Ser/Thr protein kinase family.

Its subcellular location is the cell membrane. The chain is Probable inactive leucine-rich repeat receptor-like protein kinase At3g03770 from Arabidopsis thaliana (Mouse-ear cress).